Here is a 371-residue protein sequence, read N- to C-terminus: Anhydro-N-acetylmuramic acid kinase (371 aa).

10–17 is an ATP binding site; sequence GTSLDGID.

Belongs to the anhydro-N-acetylmuramic acid kinase family.

The enzyme catalyses 1,6-anhydro-N-acetyl-beta-muramate + ATP + H2O = N-acetyl-D-muramate 6-phosphate + ADP + H(+). The protein operates within amino-sugar metabolism; 1,6-anhydro-N-acetylmuramate degradation. It functions in the pathway cell wall biogenesis; peptidoglycan recycling. Functionally, catalyzes the specific phosphorylation of 1,6-anhydro-N-acetylmuramic acid (anhMurNAc) with the simultaneous cleavage of the 1,6-anhydro ring, generating MurNAc-6-P. Is required for the utilization of anhMurNAc either imported from the medium or derived from its own cell wall murein, and thus plays a role in cell wall recycling. This is Anhydro-N-acetylmuramic acid kinase from Chromohalobacter salexigens (strain ATCC BAA-138 / DSM 3043 / CIP 106854 / NCIMB 13768 / 1H11).